We begin with the raw amino-acid sequence, 737 residues long: Autolysin (737 aa).

Over residues 1–13 the composition is skewed to basic and acidic residues; the sequence is MKKESMSRIERRK. Disordered stretches follow at residues 1 to 28, 51 to 132, and 335 to 360; these read MKKESMSRIERRKAQQRKKTPVQWKKST, AEAT…TDSS, and PSSGGNTGGGTVNPGTGGSNNQSGTN. The signal sequence occupies residues 1-53; sequence MKKESMSRIERRKAQQRKKTPVQWKKSTTLFSSALIVSSVGTPVALLPVTAEA. Residues 67–117 show a composition bias toward low complexity; it reads PTTETGLVETPTTETTPGTTEQPTTDSSTTTESTTESSKETPTTPSTEQPT. Residues 118–132 show a composition bias toward polar residues; sequence ADSTTPVESGTTDSS. Residues 339–352 show a composition bias toward gly residues; sequence GNTGGGTVNPGTGG. In terms of domain architecture, LysM 1 spans 361-404; that stretch reads TYYTVKSGDTLNKIAAQYGVSVANLRSWNGISGDLIFVGQKLIV. Positions 409-429 are disordered; the sequence is SGNTGGSGSGGSNNNQSGTNT. A compositionally biased stretch (gly residues) spans 410–419; it reads GNTGGSGSGG. Low complexity predominate over residues 420-429; that stretch reads SNNNQSGTNT. 5 LysM domains span residues 429–472, 497–540, 565–608, 631–674, and 693–736; these read TYYT…KLIV, TYYT…KIIV, TSYT…TIIV, and KRHT…TLKV.

This sequence belongs to the glycosyl hydrolase 73 family.

Its subcellular location is the secreted. Functionally, hydrolyzes the cell wall of E.faecalis and M.lysodeikticus. May play an important role in cell wall growth and cell separation. In Enterococcus faecalis (strain ATCC 700802 / V583), this protein is Autolysin.